Consider the following 712-residue polypeptide: Translation initiation factor eIF2B subunit epsilon (712 aa).

Residues 1–20 (MAGKKGQKKSGLGNHGKNSD) are disordered. S478, S481, S507, S525, S538, and S707 each carry phosphoserine. The W2 domain maps to 539 to 710 (EFEDEDFEKE…QNADEESSSE (172 aa)).

It belongs to the eIF-2B gamma/epsilon subunits family. As to quaternary structure, component of the translation initiation factor 2B (eIF2B) complex which is a heterodecamer of two sets of five different subunits: alpha, beta, gamma, delta and epsilon. Subunits alpha, beta and delta comprise a regulatory subcomplex and subunits epsilon and gamma comprise a catalytic subcomplex. Within the complex, the hexameric regulatory complex resides at the center, with the two heterodimeric catalytic subcomplexes bound on opposite sides.

Its subcellular location is the cytoplasm. The protein resides in the cytosol. Functionally, acts as a catalytic component of the translation initiation factor 2B (eIF2B) complex, which catalyzes the exchange of GDP for GTP on eukaryotic initiation factor 2 (eIF2) and is regulated by phosphorylated eIF2. Its guanine nucleotide exchange factor activity is repressed when bound to eIF2 complex phosphorylated on the alpha subunit, thereby limiting the amount of methionyl-initiator methionine tRNA available to the ribosome and consequently global translation is repressed. It activates the synthesis of GCN4 in yeast under amino acid starvation conditions by suppressing the inhibitory effects of multiple AUG codons present in the leader of GCN4 mRNA. It may promote either repression or activation of GCN4 expression depending on amino acid availability. GCD6 and GCD7 repress GCN4 expression at the translational level by ensuring that ribosomes which have translated UORF1 will reinitiate at UORF2, -3, or -4 and thus fail to reach the GCN4 start site. The sequence is that of Translation initiation factor eIF2B subunit epsilon (GCD6) from Saccharomyces cerevisiae (strain ATCC 204508 / S288c) (Baker's yeast).